The following is a 120-amino-acid chain: MFLLHEYDIFWAFLMISSVIPILAFLISGVLAPIREGPEKLSSYESGIEPMGDAWLQFRIRYYMFALVFVVFDVETVFLYPWAMSFDVLGVSAFIEALIFVLIPIVGSVYAWRKGALEWS.

Helical transmembrane passes span 9–29, 64–84, and 88–108; these read IFWA…LISG, MFAL…PWAM, and VLGV…IVGS.

It belongs to the complex I subunit 3 family. As to quaternary structure, NDH is composed of at least 16 different subunits, 5 of which are encoded in the nucleus.

The protein localises to the plastid. The protein resides in the chloroplast thylakoid membrane. The catalysed reaction is a plastoquinone + NADH + (n+1) H(+)(in) = a plastoquinol + NAD(+) + n H(+)(out). The enzyme catalyses a plastoquinone + NADPH + (n+1) H(+)(in) = a plastoquinol + NADP(+) + n H(+)(out). In terms of biological role, NDH shuttles electrons from NAD(P)H:plastoquinone, via FMN and iron-sulfur (Fe-S) centers, to quinones in the photosynthetic chain and possibly in a chloroplast respiratory chain. The immediate electron acceptor for the enzyme in this species is believed to be plastoquinone. Couples the redox reaction to proton translocation, and thus conserves the redox energy in a proton gradient. The polypeptide is NAD(P)H-quinone oxidoreductase subunit 3, chloroplastic (Illicium oligandrum (Star anise)).